The following is a 512-amino-acid chain: Putative aldehyde-dehydrogenase-like protein y4uC (512 aa).

The tract at residues 14-41 (MKPERGRRSPLPRRPTRPPDERSSGIGN) is disordered. 266–271 (GGFATG) is a binding site for NADP(+). Active-site residues include E286 and C320.

It belongs to the aldehyde dehydrogenase family.

It functions in the pathway amino-acid degradation; 4-aminobutanoate degradation. In terms of biological role, could be a succinate-semialdehyde dehydrogenase (NADP(+)). The sequence is that of Putative aldehyde-dehydrogenase-like protein y4uC from Sinorhizobium fredii (strain NBRC 101917 / NGR234).